Here is a 258-residue protein sequence, read N- to C-terminus: Imidazole glycerol phosphate synthase subunit HisF (258 aa).

Catalysis depends on residues D11 and D130.

Belongs to the HisA/HisF family. As to quaternary structure, heterodimer of HisH and HisF.

It is found in the cytoplasm. The catalysed reaction is 5-[(5-phospho-1-deoxy-D-ribulos-1-ylimino)methylamino]-1-(5-phospho-beta-D-ribosyl)imidazole-4-carboxamide + L-glutamine = D-erythro-1-(imidazol-4-yl)glycerol 3-phosphate + 5-amino-1-(5-phospho-beta-D-ribosyl)imidazole-4-carboxamide + L-glutamate + H(+). Its pathway is amino-acid biosynthesis; L-histidine biosynthesis; L-histidine from 5-phospho-alpha-D-ribose 1-diphosphate: step 5/9. Its function is as follows. IGPS catalyzes the conversion of PRFAR and glutamine to IGP, AICAR and glutamate. The HisF subunit catalyzes the cyclization activity that produces IGP and AICAR from PRFAR using the ammonia provided by the HisH subunit. This Yersinia pestis (strain Pestoides F) protein is Imidazole glycerol phosphate synthase subunit HisF.